The chain runs to 170 residues: MKGINPFYFYIGMALILASIVSILLITKSILLFILLAFGSLVGITLILIYISRKILKIDKGRLKKEVKRIFGNRVYKILRLMLVLGYAGFIYFSGTFYNSAVLFFIFIVAFTISEFYKTYRIRIYEKGILIEGIAFYSWEEIEKTTNKDKNQTILKIKGIPKKIVINEII.

Helical transmembrane passes span 6–26, 31–51, and 91–111; these read PFYFYIGMALILASIVSILLI, LLFILLAFGSLVGITLILIYI, and IYFSGTFYNSAVLFFIFIVAF.

To M.jannaschii MJ1249.1, MJ0210.1 and MJ0785.1.

It localises to the cell membrane. This is an uncharacterized protein from Methanocaldococcus jannaschii (strain ATCC 43067 / DSM 2661 / JAL-1 / JCM 10045 / NBRC 100440) (Methanococcus jannaschii).